A 418-amino-acid polypeptide reads, in one-letter code: Putative ion-transport protein YfeO (418 aa).

11 helical membrane passes run 9–31, 55–77, 90–112, 122–140, 147–169, 189–211, 223–244, 259–281, 301–323, 343–363, and 376–398; these read MLLL…IVVM, SPLW…IRFS, LIGA…LGLA, PIMT…RLLP, WTIL…AALI, PLMA…FSLP, ILSG…VWCL, LVLG…VSLF, YFLL…FRGG, VPAV…VLVV, and VVVP…WLLL.

This sequence belongs to the chloride channel (TC 2.A.49) family.

The protein resides in the cell membrane. This Escherichia coli O157:H7 protein is Putative ion-transport protein YfeO (yfeO).